We begin with the raw amino-acid sequence, 233 residues long: MTFQPTPRQLSAIKAALFLLTLLPALHYAHGLWSDSLGANPIEALTRGMGIWTLNFLFLTLCVSPLRKLSGWHWLLRLRRMLGLTAFAYGCLHLLTYLWLDQFWDVDAIARDIWKRPFITVGATAFLLMLPLALTSSHAAIRSLGGKRWQSLHRAVYAVAILGVVHYLWLVKRVALLDPIIYALVLAILLGWRVVERIRLNGPWPTRSTPPAVQPVVFMKRDAVAALGEPKKR.

6 consecutive transmembrane segments (helical) span residues 13 to 33 (IKAA…HGLW), 44 to 64 (ALTR…LCVS), 81 to 101 (MLGL…LWLD), 117 to 137 (PFIT…LTSS), 151 to 171 (SLHR…LWLV), and 174 to 194 (VALL…GWRV). Positions 50–164 (GIWTLNFLFL…AVYAVAILGV (115 aa)) constitute a Ferric oxidoreductase domain.

The protein belongs to the MsrQ family. As to quaternary structure, heterodimer of a catalytic subunit (MsrP) and a heme-binding subunit (MsrQ).

The protein localises to the cell inner membrane. Part of the MsrPQ system that repairs oxidized periplasmic proteins containing methionine sulfoxide residues (Met-O), using respiratory chain electrons. Thus protects these proteins from oxidative-stress damage caused by reactive species of oxygen and chlorine generated by the host defense mechanisms. MsrPQ is essential for the maintenance of envelope integrity under bleach stress, rescuing a wide series of structurally unrelated periplasmic proteins from methionine oxidation. MsrQ provides electrons for reduction to the reductase catalytic subunit MsrP, using the quinone pool of the respiratory chain. Probably involved in protection against reactive chlorine species (RCS) generated by chlorite and hypochlorite. In Azospira oryzae (strain ATCC BAA-33 / DSM 13638 / PS) (Dechlorosoma suillum), this protein is Protein-methionine-sulfoxide reductase heme-binding subunit MsrQ.